Here is an 89-residue protein sequence, read N- to C-terminus: Small ribosomal subunit protein uS15 (89 aa).

The protein belongs to the universal ribosomal protein uS15 family. As to quaternary structure, part of the 30S ribosomal subunit. Forms a bridge to the 50S subunit in the 70S ribosome, contacting the 23S rRNA.

In terms of biological role, one of the primary rRNA binding proteins, it binds directly to 16S rRNA where it helps nucleate assembly of the platform of the 30S subunit by binding and bridging several RNA helices of the 16S rRNA. Its function is as follows. Forms an intersubunit bridge (bridge B4) with the 23S rRNA of the 50S subunit in the ribosome. The chain is Small ribosomal subunit protein uS15 from Shewanella frigidimarina (strain NCIMB 400).